Here is a 180-residue protein sequence, read N- to C-terminus: Stathmin-3 (180 aa).

Residues Cys-22 and Cys-24 are each lipidated (S-palmitoyl cysteine). An SLD domain is found at 38 to 180 (GDMEVKQLDK…NKEQREEMSG (143 aa)). 7 positions are modified to phosphoserine: Ser-50, Ser-60, Ser-65, Ser-68, Ser-72, Ser-73, and Ser-81. A disordered region spans residues 58 to 82 (LKSPSDLSPESPMLSSPPKRKDTSL). The span at 60–74 (SPSDLSPESPMLSSP) shows a compositional bias: low complexity. A coiled-coil region spans residues 76–179 (KRKDTSLEEL…RNKEQREEMS (104 aa)).

Belongs to the stathmin family. In terms of assembly, interacts with STAT3. Interacts with CLU (secreted form); this interaction may act as an important modulator during neuronal differentiation. In terms of processing, N-terminal palmitoylation promotes specific anchoring to the cytosolic leaflet of Golgi membranes and subsequent vesicular trafficking along dendrites and axons. Neuronal Stathmins are substrates for palmitoyltransferases ZDHHC3, ZDHHC7 and ZDHHC15.

Its subcellular location is the golgi apparatus. It localises to the cell projection. It is found in the growth cone. The protein localises to the axon. The protein resides in the cytoplasm. Its subcellular location is the cytosol. In terms of biological role, exhibits microtubule-destabilizing activity, which is antagonized by STAT3. This Bos taurus (Bovine) protein is Stathmin-3 (STMN3).